A 164-amino-acid polypeptide reads, in one-letter code: Galectin-3 (164 aa).

In terms of domain architecture, Galectin spans Ser-9–Leu-154. A carbohydrate-binding residues include His-60, Arg-64, Asn-73, and Glu-84.

Homotetramer. Oligomerization is required for carbohydrate binding.

The protein localises to the secreted. Its subcellular location is the extracellular space. It localises to the extracellular matrix. The protein resides in the cell wall. Its function is as follows. Binds lactose. May play a role in fruiting body formation. This Coprinopsis cinerea (strain Okayama-7 / 130 / ATCC MYA-4618 / FGSC 9003) (Inky cap fungus) protein is Galectin-3 (Cgl3).